The sequence spans 113 residues: UPF0482 protein CKO_01577 (113 aa).

Positions M1–A28 are cleaved as a signal peptide. Positions R44–R67 are disordered. Over residues A47–S59 the composition is skewed to basic and acidic residues.

The protein belongs to the UPF0482 family.

The chain is UPF0482 protein CKO_01577 from Citrobacter koseri (strain ATCC BAA-895 / CDC 4225-83 / SGSC4696).